The sequence spans 578 residues: tRNA (guanine(26)-N(2))-dimethyltransferase (578 aa).

In terms of domain architecture, Trm1 methyltransferase spans 18–451 (NVIRERNAEI…APPAVLWDIL (434 aa)). Arg-43 contacts S-adenosyl-L-methionine. The disordered stretch occupies residues 63 to 92 (EKALKKQRKKVKEQEDEKTTPVPEDPPVYE). The S-adenosyl-L-methionine site is built by Arg-113 and Asp-131. Zn(2+) contacts are provided by Cys-295, Cys-298, Cys-335, and Cys-338. Residues 491–578 (EANPKSRKSA…PKQPKLEATA (88 aa)) form a disordered region. Residues 564–578 (DVEHLPKQPKLEATA) are compositionally biased toward basic and acidic residues.

The protein belongs to the class I-like SAM-binding methyltransferase superfamily. Trm1 family.

It catalyses the reaction guanosine(26) in tRNA + 2 S-adenosyl-L-methionine = N(2)-dimethylguanosine(26) in tRNA + 2 S-adenosyl-L-homocysteine + 2 H(+). Its function is as follows. Dimethylates a single guanine residue at position 26 of most tRNAs using S-adenosyl-L-methionine as donor of the methyl groups. This is tRNA (guanine(26)-N(2))-dimethyltransferase from Drosophila melanogaster (Fruit fly).